The primary structure comprises 141 residues: Nucleoside diphosphate kinase (141 aa).

Residues lysine 9, phenylalanine 57, arginine 85, threonine 91, arginine 102, and asparagine 112 each contribute to the ATP site. Histidine 115 (pros-phosphohistidine intermediate) is an active-site residue.

Belongs to the NDK family. As to quaternary structure, homotetramer. Mg(2+) serves as cofactor.

Its subcellular location is the cytoplasm. The catalysed reaction is a 2'-deoxyribonucleoside 5'-diphosphate + ATP = a 2'-deoxyribonucleoside 5'-triphosphate + ADP. It carries out the reaction a ribonucleoside 5'-diphosphate + ATP = a ribonucleoside 5'-triphosphate + ADP. Functionally, major role in the synthesis of nucleoside triphosphates other than ATP. The ATP gamma phosphate is transferred to the NDP beta phosphate via a ping-pong mechanism, using a phosphorylated active-site intermediate. This chain is Nucleoside diphosphate kinase, found in Chlamydia muridarum (strain MoPn / Nigg).